Consider the following 88-residue polypeptide: Phosphocarrier protein HPr (88 aa).

Residues 1-88 (MKKIQVVVKD…KAVLEKHQVI (88 aa)) form the HPr domain. Catalysis depends on histidine 15, which acts as the Pros-phosphohistidine intermediate. Serine 47 carries the post-translational modification Phosphoserine; by HPrK/P.

This sequence belongs to the HPr family.

It is found in the cytoplasm. With respect to regulation, phosphorylation on Ser-47 inhibits the phosphoryl transfer from enzyme I to HPr. General (non sugar-specific) component of the phosphoenolpyruvate-dependent sugar phosphotransferase system (sugar PTS). This major carbohydrate active-transport system catalyzes the phosphorylation of incoming sugar substrates concomitantly with their translocation across the cell membrane. The phosphoryl group from phosphoenolpyruvate (PEP) is transferred to the phosphoryl carrier protein HPr by enzyme I. Phospho-HPr then transfers it to the PTS EIIA domain. Its function is as follows. P-Ser-HPr interacts with the catabolite control protein A (CcpA), forming a complex that binds to DNA at the catabolite response elements cre, operator sites preceding a large number of catabolite-regulated genes. Thus, P-Ser-HPr is a corepressor in carbon catabolite repression (CCR), a mechanism that allows bacteria to coordinate and optimize the utilization of available carbon sources. P-Ser-HPr also plays a role in inducer exclusion, in which it probably interacts with several non-PTS permeases and inhibits their transport activity. The protein is Phosphocarrier protein HPr (ptsH) of Mycoplasma pneumoniae (strain ATCC 29342 / M129 / Subtype 1) (Mycoplasmoides pneumoniae).